Consider the following 362-residue polypeptide: Protein-glutamate methylesterase/protein-glutamine glutaminase (362 aa).

In terms of domain architecture, Response regulatory spans 5–122; the sequence is KVLCVDDSAL…RDGMLDYSEK (118 aa). Asp-56 bears the 4-aspartylphosphate mark. The region spanning 163–355 is the CheB-type methylesterase domain; the sequence is LLSTEKLIIV…RRVMARLSSM (193 aa). Catalysis depends on residues Ser-175, His-201, and Asp-297.

It belongs to the CheB family. In terms of processing, phosphorylated by CheA. Phosphorylation of the N-terminal regulatory domain activates the methylesterase activity.

The protein localises to the cytoplasm. It carries out the reaction [protein]-L-glutamate 5-O-methyl ester + H2O = L-glutamyl-[protein] + methanol + H(+). The enzyme catalyses L-glutaminyl-[protein] + H2O = L-glutamyl-[protein] + NH4(+). Involved in chemotaxis. Part of a chemotaxis signal transduction system that modulates chemotaxis in response to various stimuli. Catalyzes the demethylation of specific methylglutamate residues introduced into the chemoreceptors (methyl-accepting chemotaxis proteins or MCP) by CheR. Also mediates the irreversible deamidation of specific glutamine residues to glutamic acid. This is Protein-glutamate methylesterase/protein-glutamine glutaminase from Paraburkholderia xenovorans (strain LB400).